The primary structure comprises 291 residues: Elongation factor Ts (291 aa).

An involved in Mg(2+) ion dislocation from EF-Tu region spans residues 84 to 87 (TDFV).

The protein belongs to the EF-Ts family.

It localises to the cytoplasm. Associates with the EF-Tu.GDP complex and induces the exchange of GDP to GTP. It remains bound to the aminoacyl-tRNA.EF-Tu.GTP complex up to the GTP hydrolysis stage on the ribosome. In Bifidobacterium adolescentis (strain ATCC 15703 / DSM 20083 / NCTC 11814 / E194a), this protein is Elongation factor Ts.